Consider the following 263-residue polypeptide: uncharacterized protein (263 aa).

Residues 44 to 131 enclose the GST N-terminal domain; sequence QVYSLGTPNG…YLADKFNHLI (88 aa). A GST C-terminal domain is found at 134-263; the sequence is DWAQRTEVLN…ALEVDYKAIK (130 aa).

The protein belongs to the GST superfamily. Homodimer.

This is an uncharacterized protein from Streptococcus mutans serotype c (strain ATCC 700610 / UA159).